We begin with the raw amino-acid sequence, 92 residues long: RNA-binding protein Hfq (92 aa).

A Sm domain is found at 9-68 (DPFLNALRRERVPVSVYLVNGIKLQGTIESFDQFVVLLRNTVSQMVYKHAISTVVPARNV).

The protein belongs to the Hfq family. In terms of assembly, homohexamer.

Its function is as follows. RNA chaperone that binds small regulatory RNA (sRNAs) and mRNAs to facilitate mRNA translational regulation in response to envelope stress, environmental stress and changes in metabolite concentrations. Also binds with high specificity to tRNAs. The protein is RNA-binding protein Hfq of Xylella fastidiosa (strain M12).